The sequence spans 467 residues: Na(+)-translocating NADH-quinone reductase subunit A (467 aa).

It belongs to the NqrA family. Composed of six subunits; NqrA, NqrB, NqrC, NqrD, NqrE and NqrF.

It catalyses the reaction a ubiquinone + n Na(+)(in) + NADH + H(+) = a ubiquinol + n Na(+)(out) + NAD(+). In terms of biological role, NQR complex catalyzes the reduction of ubiquinone-1 to ubiquinol by two successive reactions, coupled with the transport of Na(+) ions from the cytoplasm to the periplasm. NqrA to NqrE are probably involved in the second step, the conversion of ubisemiquinone to ubiquinol. The protein is Na(+)-translocating NADH-quinone reductase subunit A of Chlamydia pneumoniae (Chlamydophila pneumoniae).